Here is a 115-residue protein sequence, read N- to C-terminus: Parathyroid hormone (115 aa).

The N-terminal stretch at 1–25 (MMSAKDMVKVMIVMLAICFLARSDG) is a signal peptide. The propeptide occupies 26-31 (KSVKKR). Residues 51 to 69 (RVEWLRKKLQDVHNFVALG) are important for receptor binding. Residues 77 to 99 (GSSQRPRKKEDNVLVESHQKSLG) are disordered. Positions 84-99 (KKEDNVLVESHQKSLG) are enriched in basic and acidic residues.

The protein belongs to the parathyroid hormone family. As to quaternary structure, interacts with PTH1R (via N-terminal extracellular domain).

Its subcellular location is the secreted. Parathyroid hormone elevates calcium level by dissolving the salts in bone and preventing their renal excretion. Acts by binding to its receptor, PTH1R, activating G protein-coupled receptor signaling. Stimulates [1-14C]-2-deoxy-D-glucose (2DG) transport and glycogen synthesis in osteoblastic cells. This chain is Parathyroid hormone, found in Bos taurus (Bovine).